We begin with the raw amino-acid sequence, 409 residues long: Pentatricopeptide repeat-containing protein At5g09450, mitochondrial (409 aa).

Residues 1–38 (MATRSLFHSLRCRLTNNGVLGSNFIRNAESSRFSKSYN) constitute a mitochondrion transit peptide. 6 PPR repeats span residues 155–189 (TAETYTSLLHAYAASKQTERAEALFKRIIESDSLT), 191–225 (GAITYNEMMTLYMSVGQVEKVPEVIEVLKQKKVSP), 226–256 (DIFTYNLWLSSCAATFNIDELRKILEEMRHD), 262–296 (GWVRYIDLTSIYINSSRVTNAESTLPVEAEKSISQ), 298–332 (EWITYDFLMILHTGLGNKVMIDQIWKSLRNTNQIL), and 333–367 (SSRSYICVLSSYLMLGHLREAEEIIHQWKESKTTE).

It belongs to the PPR family. P subfamily.

The protein resides in the mitochondrion. The chain is Pentatricopeptide repeat-containing protein At5g09450, mitochondrial from Arabidopsis thaliana (Mouse-ear cress).